Here is a 366-residue protein sequence, read N- to C-terminus: D-alanine--D-alanine ligase (366 aa).

The ATP-grasp domain maps to 146–352; that stretch reads KICFEHAGLQ…YTELINRLIE (207 aa). An ATP-binding site is contributed by 179-234; the sequence is EKKLRYPMFVKPANMGSSVGISKAHNRNELIEAIELALAYDRKFLIEKAINAREME. Positions 305, 319, and 321 each coordinate Mg(2+).

Belongs to the D-alanine--D-alanine ligase family. Mg(2+) serves as cofactor. Mn(2+) is required as a cofactor.

The protein localises to the cytoplasm. The enzyme catalyses 2 D-alanine + ATP = D-alanyl-D-alanine + ADP + phosphate + H(+). The protein operates within cell wall biogenesis; peptidoglycan biosynthesis. In terms of biological role, cell wall formation. The protein is D-alanine--D-alanine ligase of Chloroherpeton thalassium (strain ATCC 35110 / GB-78).